We begin with the raw amino-acid sequence, 214 residues long: Pyridoxine/pyridoxamine 5'-phosphate oxidase (214 aa).

Substrate contacts are provided by residues 8 to 11 (RLSY) and Arg-66. FMN is bound by residues 61–66 (RTVLLR), 76–77 (FT), Lys-83, and Gln-105. Tyr-123, Arg-127, and Ser-131 together coordinate substrate. The tract at residues 126–146 (SRPRESQLAAHASDPQSAPVS) is disordered. FMN-binding positions include 141–142 (QS) and Trp-187. 193 to 195 (RMH) is a binding site for substrate. An FMN-binding site is contributed by Arg-197.

The protein belongs to the pyridoxamine 5'-phosphate oxidase family. Homodimer. FMN serves as cofactor.

The enzyme catalyses pyridoxamine 5'-phosphate + O2 + H2O = pyridoxal 5'-phosphate + H2O2 + NH4(+). The catalysed reaction is pyridoxine 5'-phosphate + O2 = pyridoxal 5'-phosphate + H2O2. Its pathway is cofactor metabolism; pyridoxal 5'-phosphate salvage; pyridoxal 5'-phosphate from pyridoxamine 5'-phosphate: step 1/1. It functions in the pathway cofactor metabolism; pyridoxal 5'-phosphate salvage; pyridoxal 5'-phosphate from pyridoxine 5'-phosphate: step 1/1. Functionally, catalyzes the oxidation of either pyridoxine 5'-phosphate (PNP) or pyridoxamine 5'-phosphate (PMP) into pyridoxal 5'-phosphate (PLP). This chain is Pyridoxine/pyridoxamine 5'-phosphate oxidase, found in Deinococcus deserti (strain DSM 17065 / CIP 109153 / LMG 22923 / VCD115).